Reading from the N-terminus, the 194-residue chain is MKIKLIVGLANPGAEYAATRHNAGAWYVELLAERYRQTLKEESKFYGYTGRLTLGGQDVRLLVPTTFMNLSGKAVAAMATFYRIAPEDILVAHDELDLLPGSARLKLGGGHGGHNGLKDIISRLGNNPQFHRLRIGISHPGDKNQVVGFVLGKPPTAERQLIDSAIDEAVRCTEILVTQDAVKAMNRLHAYRPG.

Residue Tyr-16 coordinates tRNA. Residue His-21 is the Proton acceptor of the active site. TRNA contacts are provided by Phe-67, Asn-69, and Asn-115.

The protein belongs to the PTH family. Monomer.

It localises to the cytoplasm. The catalysed reaction is an N-acyl-L-alpha-aminoacyl-tRNA + H2O = an N-acyl-L-amino acid + a tRNA + H(+). Its function is as follows. Hydrolyzes ribosome-free peptidyl-tRNAs (with 1 or more amino acids incorporated), which drop off the ribosome during protein synthesis, or as a result of ribosome stalling. Catalyzes the release of premature peptidyl moieties from peptidyl-tRNA molecules trapped in stalled 50S ribosomal subunits, and thus maintains levels of free tRNAs and 50S ribosomes. This chain is Peptidyl-tRNA hydrolase, found in Sodalis glossinidius (strain morsitans).